The sequence spans 20 residues: T cell receptor alpha joining 3 (20 aa).

Alpha-beta TR is a heterodimer composed of an alpha and beta chain; disulfide-linked. The alpha-beta TR is associated with the transmembrane signaling CD3 coreceptor proteins to form the TR-CD3 (TcR or TCR). The assembly of alpha-beta TR heterodimers with CD3 occurs in the endoplasmic reticulum where a single alpha-beta TR heterodimer associates with one CD3D-CD3E heterodimer, one CD3G-CD3E heterodimer and one CD247 homodimer forming a stable octameric structure. CD3D-CD3E and CD3G-CD3E heterodimers preferentially associate with TR alpha and TR beta chains, respectively. The association of the CD247 homodimer is the last step of TcR assembly in the endoplasmic reticulum and is required for transport to the cell surface.

It is found in the cell membrane. J region of the variable domain of T cell receptor (TR) alpha chain that participates in the antigen recognition. Alpha-beta T cell receptors are antigen specific receptors which are essential to the immune response and are present on the cell surface of T lymphocytes. Recognize peptide-major histocompatibility (MH) (pMH) complexes that are displayed by antigen presenting cells (APC), a prerequisite for efficient T cell adaptive immunity against pathogens. Binding of alpha-beta TR to pMH complex initiates TR-CD3 clustering on the cell surface and intracellular activation of LCK that phosphorylates the ITAM motifs of CD3G, CD3D, CD3E and CD247 enabling the recruitment of ZAP70. In turn ZAP70 phosphorylates LAT, which recruits numerous signaling molecules to form the LAT signalosome. The LAT signalosome propagates signal branching to three major signaling pathways, the calcium, the mitogen-activated protein kinase (MAPK) kinase and the nuclear factor NF-kappa-B (NF-kB) pathways, leading to the mobilization of transcription factors that are critical for gene expression and essential for T cell growth and differentiation. The T cell repertoire is generated in the thymus, by V-(D)-J rearrangement. This repertoire is then shaped by intrathymic selection events to generate a peripheral T cell pool of self-MH restricted, non-autoaggressive T cells. Post-thymic interaction of alpha-beta TR with the pMH complexes shapes TR structural and functional avidity. The sequence is that of T cell receptor alpha joining 3 from Homo sapiens (Human).